The chain runs to 80 residues: Conotoxin Pu11.1 (80 aa).

A signal peptide spans 1 to 19; the sequence is MKLVLAIVLILMLLSLSTG. A propeptide spanning residues 20-42 is cleaved from the precursor; sequence AEMSDNHASRSATALTDRLLGPK. 4 cysteine pairs are disulfide-bonded: C46–C60, C53–C65, C59–C72, and C64–C79.

This sequence belongs to the conotoxin I3 superfamily. As to expression, expressed by the venom duct.

It is found in the secreted. The protein is Conotoxin Pu11.1 of Conus pulicarius (Flea-bitten cone).